Here is a 72-residue protein sequence, read N- to C-terminus: Translation initiation factor IF-1 (72 aa).

The S1-like domain maps to 2–72 (AKEDVIEIQG…TKGRITYRFK (71 aa)).

This sequence belongs to the IF-1 family. Component of the 30S ribosomal translation pre-initiation complex which assembles on the 30S ribosome in the order IF-2 and IF-3, IF-1 and N-formylmethionyl-tRNA(fMet); mRNA recruitment can occur at any time during PIC assembly.

The protein localises to the cytoplasm. Its function is as follows. One of the essential components for the initiation of protein synthesis. Stabilizes the binding of IF-2 and IF-3 on the 30S subunit to which N-formylmethionyl-tRNA(fMet) subsequently binds. Helps modulate mRNA selection, yielding the 30S pre-initiation complex (PIC). Upon addition of the 50S ribosomal subunit IF-1, IF-2 and IF-3 are released leaving the mature 70S translation initiation complex. The chain is Translation initiation factor IF-1 from Lactiplantibacillus plantarum (strain ATCC BAA-793 / NCIMB 8826 / WCFS1) (Lactobacillus plantarum).